Reading from the N-terminus, the 369-residue chain is Biglycan (369 aa).

The signal sequence occupies residues Met1 to Ala16. A propeptide spanning residues Leu17 to Asn37 is cleaved from the precursor. O-linked (Xyl...) (glycosaminoglycan) serine glycans are attached at residues Ser42 and Ser48. 2 cysteine pairs are disulfide-bonded: Cys64/Cys70 and Cys68/Cys77. LRR repeat units lie at residues Lys83–Ile103, Ser104–Ile127, Ser128–Leu151, Val152–Ile172, Arg173–Leu196, Glu197–Leu221, Thr222–Ile242, Gln243–Ile266, Arg267–Leu290, Ser291–Ile313, Thr314–Val343, and Pro344–Lys369. 2 N-linked (GlcNAc...) asparagine glycosylation sites follow: Asn271 and Asn312. A disulfide bond links Cys322 and Cys355.

It belongs to the small leucine-rich proteoglycan (SLRP) family. SLRP class I subfamily. Post-translationally, the two attached glycosaminoglycan chains can be either chondroitin sulfate or dermatan sulfate. Found in several connective tissues, especially in articular cartilages.

The protein resides in the secreted. The protein localises to the extracellular space. It localises to the extracellular matrix. In terms of biological role, may be involved in collagen fiber assembly. In Mus musculus (Mouse), this protein is Biglycan (Bgn).